Here is a 291-residue protein sequence, read N- to C-terminus: Pyridoxal 5'-phosphate synthase subunit PdxS (291 aa).

Position 23 (Asp23) interacts with D-ribose 5-phosphate. Lys80 functions as the Schiff-base intermediate with D-ribose 5-phosphate in the catalytic mechanism. Gly152 contributes to the D-ribose 5-phosphate binding site. Arg164 is a binding site for D-glyceraldehyde 3-phosphate. Residues Gly213 and 234-235 contribute to the D-ribose 5-phosphate site; that span reads GS.

This sequence belongs to the PdxS/SNZ family. As to quaternary structure, in the presence of PdxT, forms a dodecamer of heterodimers.

It catalyses the reaction aldehydo-D-ribose 5-phosphate + D-glyceraldehyde 3-phosphate + L-glutamine = pyridoxal 5'-phosphate + L-glutamate + phosphate + 3 H2O + H(+). It functions in the pathway cofactor biosynthesis; pyridoxal 5'-phosphate biosynthesis. In terms of biological role, catalyzes the formation of pyridoxal 5'-phosphate from ribose 5-phosphate (RBP), glyceraldehyde 3-phosphate (G3P) and ammonia. The ammonia is provided by the PdxT subunit. Can also use ribulose 5-phosphate and dihydroxyacetone phosphate as substrates, resulting from enzyme-catalyzed isomerization of RBP and G3P, respectively. The sequence is that of Pyridoxal 5'-phosphate synthase subunit PdxS from Bifidobacterium longum (strain DJO10A).